Reading from the N-terminus, the 150-residue chain is Large ribosomal subunit protein bL9 (150 aa).

It belongs to the bacterial ribosomal protein bL9 family.

Binds to the 23S rRNA. The protein is Large ribosomal subunit protein bL9 of Lactococcus lactis subsp. cremoris (strain SK11).